The chain runs to 61 residues: U-poneritoxin(01)-Om5b (61 aa).

The signal sequence occupies residues 1 to 23 (MKLSALSLAFAIILMMTIMYTKA). The propeptide occupies 24 to 41 (DADASADAEADADAEAEA). Position 59 is a glutamine amide (glutamine 59).

The protein belongs to the formicidae venom precursor-01 superfamily. Truncated sequences of this peptide have also been found in the venom. It is possible they have been cleaved in the venom. In terms of tissue distribution, expressed by the venom gland.

The protein localises to the secreted. Acidic peptide with potent hemolytic activities. It also shows low antimicrobial activities against E.coli (MIC=50uM), as well as histamine-releasing activity (28.3% at 10 uM). Does not have activity against S.aureus, and S.cerevisiae. This Odontomachus monticola (Trap-jaw ant) protein is U-poneritoxin(01)-Om5b.